The following is a 403-amino-acid chain: Dihydroorotase (403 aa).

Zn(2+) contacts are provided by histidine 48 and histidine 50. Residues 50–52 (HLR) and asparagine 82 each bind substrate. Residues glutamate 140, histidine 172, histidine 211, and aspartate 277 each contribute to the Zn(2+) site. Aspartate 277 is an active-site residue. Substrate is bound at residue histidine 281.

The protein belongs to the metallo-dependent hydrolases superfamily. DHOase family. Class I DHOase subfamily. The cofactor is Zn(2+).

It carries out the reaction (S)-dihydroorotate + H2O = N-carbamoyl-L-aspartate + H(+). It participates in pyrimidine metabolism; UMP biosynthesis via de novo pathway; (S)-dihydroorotate from bicarbonate: step 3/3. Catalyzes the reversible cyclization of carbamoyl aspartate to dihydroorotate. The protein is Dihydroorotase of Archaeoglobus fulgidus (strain ATCC 49558 / DSM 4304 / JCM 9628 / NBRC 100126 / VC-16).